The sequence spans 320 residues: E3 ubiquitin-protein ligase RZF1 (320 aa).

N-acetylserine is present on Ser2. The RING-type; atypical zinc-finger motif lies at 186 to 227 (CPVCKDEFELKSEAKQMPCHHIYHSDCIVPWLVQHNSCPVCR). The segment at 229–320 (ELPSRGSSSS…MGYSGWPFDY (92 aa)) is disordered. Low complexity-rich tracts occupy residues 232 to 249 (SRGS…STNG) and 295 to 308 (QQQQ…QQQQ).

In terms of tissue distribution, expressed in seedlings and in flowers.

It carries out the reaction S-ubiquitinyl-[E2 ubiquitin-conjugating enzyme]-L-cysteine + [acceptor protein]-L-lysine = [E2 ubiquitin-conjugating enzyme]-L-cysteine + N(6)-ubiquitinyl-[acceptor protein]-L-lysine.. E3 ubiquitin-protein ligase that promotes osmotic stress and abscisic acid (ABA) responses. Negatively regulates drought-mediated control of early seedling development, probably by influencing proline content, water loss, membrane ion leakage and the expression of dehydration stress-related genes (e.g. RAB18, RD29A, RD29B, AOX1A, ERD15, ERD1, COR15A, P5CS1 and P5CR). Modulates bZIP11 accumulation during rehydration following drought. The protein is E3 ubiquitin-protein ligase RZF1 of Arabidopsis thaliana (Mouse-ear cress).